A 91-amino-acid chain; its full sequence is Large ribosomal subunit protein bL27 (91 aa).

The interval 1–24 is disordered; the sequence is MAHKKGVGSSRNGRDSNPKMRGVK.

Belongs to the bacterial ribosomal protein bL27 family.

This chain is Large ribosomal subunit protein bL27, found in Chloroflexus aggregans (strain MD-66 / DSM 9485).